Reading from the N-terminus, the 63-residue chain is Conotoxin Cl14.11 (63 aa).

A signal peptide spans 1 to 21 (MRFLLLLTVALLLTCIMETDA). The propeptide occupies 22–34 (EAKPEDLAERFRE).

In terms of processing, contains 2 disulfide bond. In terms of tissue distribution, expressed by the venom duct.

Its subcellular location is the secreted. This is Conotoxin Cl14.11 from Californiconus californicus (California cone).